The primary structure comprises 1116 residues: Protein STICHEL-like 1 (1116 aa).

Disordered stretches follow at residues R95 to T138 and K225 to P244. A compositionally biased stretch (acidic residues) spans N115–V124. 2 short sequence motifs (PEST) span residues R257 to R282 and K402 to Q422. G463–T470 lines the ATP pocket. C482, C492, C495, and C498 together coordinate Zn(2+). A coiled-coil region spans residues E726–T760. Positions P777–S798 are disordered. The segment covering S778–R793 has biased composition (polar residues).

The protein belongs to the DnaX/STICHEL family.

The polypeptide is Protein STICHEL-like 1 (Arabidopsis thaliana (Mouse-ear cress)).